The following is a 511-amino-acid chain: Probable endopeptidase p60 (511 aa).

The first 27 residues, 1–27 (MNMKKATIVSAAGIAVTAFAAPSVVSA), serve as a signal peptide directing secretion. Positions 28 to 71 (NTVVVASGDTLWGIASKTGTTVDQLKQLNKLDSDRIVPGQKLTI) constitute a LysM 1 domain. The 65-residue stretch at 78–142 (KVEKSVSATW…VNGKYLSDAK (65 aa)) folds into the SH3b domain. The LysM 2 domain maps to 175 to 218 (STYKVKSGDTIWALSVKYGVPVQKLIEWNNLSSSSIYVGQTIAV). Composition is skewed to low complexity over residues 229 to 257 (TVKQAAPAKVAPKQEVKQTAPAKQEQAKP) and 264 to 282 (KPAVSKPKAATPAPTAKPA). The segment at 229 to 291 (TVKQAAPAKV…AVEQKASTPA (63 aa)) is disordered. The region spanning 297-341 (ATYKVQNGDSLGKIASLFKVSVADLTNWNNLNATITIYAGQELSV) is the LysM 3 domain. 2 stretches are compositionally biased toward low complexity: residues 347 to 362 (KPKPAAPAKPAVSKPA) and 372 to 390 (TNTTNNSTPTTNVNNNTSQ). The interval 347–390 (KPKPAAPAKPAVSKPATSTPAKVTPTNTTNNSTPTTNVNNNTSQ) is disordered. In terms of domain architecture, NlpC/P60 spans 393-511 (SASFSALYAE…GQYLVGFGRV (119 aa)). Cys-423 acts as the Nucleophile in catalysis. His-473 serves as the catalytic Proton acceptor. Residue Asp-485 is part of the active site.

The protein belongs to the peptidase C40 family.

Its function is as follows. This major extracellular protein may be involved in the invasion of non-professional phagocytic cells by Listeria. This chain is Probable endopeptidase p60 (iap), found in Listeria grayi (Listeria murrayi).